The following is a 564-amino-acid chain: Proline--tRNA ligase (564 aa).

It belongs to the class-II aminoacyl-tRNA synthetase family. ProS type 1 subfamily. Homodimer.

It localises to the cytoplasm. The catalysed reaction is tRNA(Pro) + L-proline + ATP = L-prolyl-tRNA(Pro) + AMP + diphosphate. Functionally, catalyzes the attachment of proline to tRNA(Pro) in a two-step reaction: proline is first activated by ATP to form Pro-AMP and then transferred to the acceptor end of tRNA(Pro). As ProRS can inadvertently accommodate and process non-cognate amino acids such as alanine and cysteine, to avoid such errors it has two additional distinct editing activities against alanine. One activity is designated as 'pretransfer' editing and involves the tRNA(Pro)-independent hydrolysis of activated Ala-AMP. The other activity is designated 'posttransfer' editing and involves deacylation of mischarged Ala-tRNA(Pro). The misacylated Cys-tRNA(Pro) is not edited by ProRS. In Bacillus velezensis (strain DSM 23117 / BGSC 10A6 / LMG 26770 / FZB42) (Bacillus amyloliquefaciens subsp. plantarum), this protein is Proline--tRNA ligase.